Here is a 123-residue protein sequence, read N- to C-terminus: Galanin peptides (123 aa).

An N-terminal signal peptide occupies residues 1-19 (MPRGCALLLASLLLASALS). A propeptide spanning residues 20–30 (ATLGLGSPVKE) is cleaved from the precursor. Position 61 is an alanine amide (Ala-61). 2 positions are modified to phosphoserine: Ser-116 and Ser-117.

It belongs to the galanin family.

The protein localises to the secreted. Endocrine hormone of the central and peripheral nervous systems that binds and activates the G protein-coupled receptors GALR1, GALR2, and GALR3. This small neuropeptide may regulate diverse physiologic functions including contraction of smooth muscle of the gastrointestinal and genitourinary tract, growth hormone and insulin release and adrenal secretion. This chain is Galanin peptides (GAL), found in Sus scrofa (Pig).